Consider the following 477-residue polypeptide: Transcription factor Sox-9-A (477 aa).

2 disordered regions span residues 1–66 (MNLL…ETED) and 157–274 (EAER…FRDV). Low complexity predominate over residues 27 to 42 (SDDSAGSPCPSGSGSD). 2 stretches are compositionally biased toward basic and acidic residues: residues 56 to 66 (GDQELKKETED) and 157 to 174 (EAER…DYKY). Lysine 61 is covalently cross-linked (Glycyl lysine isopeptide (Lys-Gly) (interchain with G-Cter in SUMO)). The dimerization (DIM) stretch occupies residues 63–103 (ETEDEKFPVCIREAVSQVLKGYDWTLVPMPVRVNGSSKNKP). Residues 63–103 (ETEDEKFPVCIREAVSQVLKGYDWTLVPMPVRVNGSSKNKP) are PQA. Residues 105–173 (VKRPMNAFMV…QHKKDHPDYK (69 aa)) constitute a DNA-binding region (HMG box). Residues 211–222 (SPHSSSSMSEVH) show a composition bias toward low complexity. The segment at 224–308 (PGEHSGQSQG…LPPNGHPGVG (85 aa)) is transactivation domain (TAM). 2 consecutive short sequence motifs (9aaTAD) follow at residues 276–285 (IGELSSEVIS) and 291–299 (DVNEFDQYL). Residues 301–384 (PNGHPGVGST…SDQQQQHSPQ (84 aa)) are disordered. Composition is skewed to polar residues over residues 308-328 (GSTQ…SATT) and 346-361 (HSLS…SQQR). The segment at 361-477 (RTHIKTEQLS…QPVYTQLTRP (117 aa)) is transactivation domain (TAC). Lysine 365 is covalently cross-linked (Glycyl lysine isopeptide (Lys-Gly) (interchain with G-Cter in SUMO)). Residues 370-384 (SPSHYSDQQQQHSPQ) are compositionally biased toward low complexity. A 9aaTAD 3 motif is present at residues 428–436 (SGLYSTFSY). A disordered region spans residues 446-477 (TPIADTTGVPSIPQTHSPQHWEQPVYTQLTRP). Polar residues predominate over residues 453-477 (GVPSIPQTHSPQHWEQPVYTQLTRP).

Interacts with the sumoylation factors ube2i/ubc9 and sumo1. Sumoylated. Lys-365 is the major site of sumoylation, although sumoylation at Lys-61 also occurs. Sumoylation plays a key role in regulating formation of the neural crest and otic placode. As to expression, from mid-gastrula (stage 10.5-11), expressed in a ring around the blastopore, with expression decreasing toward the dorsal side. At stage 12, expression around the blastopore decreases and begins to increase lateral to the neural plate in the presumptive neural crest, where expression dramatically increases around stage 14. Also expressed in the otic placode as early as stage 13/14. By the tailbud stage expression is restricted to the otic cup and then throughout the otic vesicle, with more intense staining at the dorsal-most region, the prospective region of the semicircular canals and endolymphatic duct. At the early tailbud stage (stage 23), expressed in migrating cranial neural crest cells and in the trunk neural crest. Also expressed in the genital ridges, developing eye, nasal placode and prospective pineal gland. Around stage 25, expression is down-regulated in the trunk neural crest but persists in the migrating cranial crest cells as they populate the pharyngeal arches, otic placode, developing eye, genital ridges and notochord. By stage 31, expression remains strong in the pharyngeal arches. Also expressed in the pancreas; first expressed at stage 25 in the pancreatic anlagen, dorsally in diverticulum. As development proceeds, expression continues in pancreatic tissue, being restricted to ventral and dorsal pancreatic buds.

It localises to the nucleus. Its subcellular location is the cytoplasm. Functionally, transcription factor that plays a key role in chondrocytes differentiation and skeletal development. Specifically binds the 5'-ACAAAG-3' DNA motif present in enhancers and super-enhancers and promotes expression of genes important for chondrogenesis, including COL2A1. Plays a central role in successive steps of chondrocyte differentiation. Absolutely required for precartilaginous condensation, the first step in chondrogenesis during which skeletal progenitors differentiate into prechondrocytes. Together with SOX5 and SOX6, required for overt chondrogenesis when condensed prechondrocytes differentiate into early stage chondrocytes, the second step in chondrogenesis. Later, required to direct hypertrophic maturation and block osteoblast differentiation of growth plate chondrocytes: maintains chondrocyte columnar proliferation, delays prehypertrophy and then prevents osteoblastic differentiation of chondrocytes. Also required for chondrocyte hypertrophy, both indirectly, by keeping the lineage fate of chondrocytes, and directly, by remaining present in upper hypertrophic cells. Low lipid levels are the main nutritional determinant for chondrogenic commitment of skeletal progenitor cells: when lipids levels are low, FOXO transcription factors promote expression of SOX9, which induces chondrogenic commitment and suppresses fatty acid oxidation. In addition to cartilage development, also acts as a regulator of proliferation and differentiation in epithelial stem/progenitor cells. Involved in development of the cranial neural crest, which is fated to form skeletal elements. Also required for otic placode specification during inner ear development. In Xenopus laevis (African clawed frog), this protein is Transcription factor Sox-9-A (sox9-a).